The sequence spans 494 residues: Subtilisin-like serine protease Pen ch 18.0101 (494 aa).

A signal peptide spans 1–16 (MKGFLSLTLLPLLVAA). The propeptide at 17–136 (SPVAVNSIHN…IEKDSEVRTM (120 aa)) is removed in mature form. The Inhibitor I9 domain maps to 43-136 (SYIVVFKKHV…IEKDSEVRTM (94 aa)). The Peptidase S8 domain occupies 146–448 (PWGLARISHR…GGSANYTKIL (303 aa)). 2 igE-binding regions span residues 180-198 (VIDT…RANW) and 209-231 (EDGN…GVAK). Catalysis depends on charge relay system residues D182 and H214. N244 and N280 each carry an N-linked (GlcNAc...) asparagine glycan. The Charge relay system role is filled by S376. N443 carries an N-linked (GlcNAc...) asparagine glycan. Positions 454 to 494 (KAHNAETTVEDRIGIIIDSAEKAFHKELGAIYSEIKDAVSV) are cleaved as a propeptide — removed in mature form.

The protein belongs to the peptidase S8 family.

Functionally, serine protease. The chain is Subtilisin-like serine protease Pen ch 18.0101 from Penicillium rubens.